The chain runs to 213 residues: Histone H1.2 (213 aa).

Over residues 1-17 (MSETAPAAPAAAPPAEK) the composition is skewed to low complexity. The segment at 1–41 (MSETAPAAPAAAPPAEKAPVKKKAAKKAGGTPRKASGPPVS) is disordered. An N-acetylserine; partial modification is found at S2. S2 is modified (phosphoserine). K17 carries the post-translational modification N6-acetyllysine. An N6-(2-hydroxyisobutyryl)lysine mark is found at K23, K26, and K27. K34 bears the N6-(beta-hydroxybutyryl)lysine; alternate mark. An N6-crotonyllysine; alternate modification is found at K34. At K34 the chain carries N6-methyllysine; alternate. The region spanning 36 to 109 (SGPPVSELIT…GASGSFKLNK (74 aa)) is the H15 domain. N6-(2-hydroxyisobutyryl)lysine is present on K46. An N6-(beta-hydroxybutyryl)lysine; alternate modification is found at K52. Residue K52 is modified to N6-(2-hydroxyisobutyryl)lysine; alternate. Residue R54 is modified to Citrulline. K63 carries the N6-(2-hydroxyisobutyryl)lysine modification. The residue at position 64 (K64) is an N6-(beta-hydroxybutyryl)lysine; alternate. K64 bears the N6-crotonyllysine; alternate mark. The residue at position 64 (K64) is an N6-(2-hydroxyisobutyryl)lysine; alternate. Residues K75 and K81 each carry the N6-(2-hydroxyisobutyryl)lysine modification. An N6-(beta-hydroxybutyryl)lysine; alternate mark is found at K85 and K90. Residues K85, K90, and K97 each carry the N6-crotonyllysine; alternate modification. N6-(2-hydroxyisobutyryl)lysine; alternate is present on residues K85, K90, and K97. Residues 92–213 (TLVQTKGTGA…KPKKAAPKKK (122 aa)) are disordered. K97 carries the post-translational modification N6-succinyllysine; alternate. At S104 the chain carries Phosphoserine; by PKC. Position 106 is an N6-(beta-hydroxybutyryl)lysine (K106). K110, K117, K121, K129, and K136 each carry N6-(2-hydroxyisobutyryl)lysine. Basic residues predominate over residues 119–140 (KVKKAGGTKPKKPVGAAKKPKK). A Phosphothreonine modification is found at T146. At K148 the chain carries N6-(2-hydroxyisobutyryl)lysine. The span at 149 to 160 (KSAKKTPKKAKK) shows a compositional bias: basic residues. N6-crotonyllysine; alternate occurs at positions 159 and 168. Residues K159 and K168 each carry the N6-(2-hydroxyisobutyryl)lysine; alternate modification. Basic residues predominate over residues 169–186 (KVAKSPKKAKVAKPKKAA). At K187 the chain carries N6-methyllysine; by EHMT1 and EHMT2. Residue S188 is modified to ADP-ribosylserine. Over residues 193-213 (VKPKAAKPKVVKPKKAAPKKK) the composition is skewed to basic residues. K213 is subject to N6-(2-hydroxyisobutyryl)lysine.

Belongs to the histone H1/H5 family. As to quaternary structure, interacts with TSC22D1 isoforms 2 and 5. H1 histones are progressively phosphorylated during the cell cycle, becoming maximally phosphorylated during late G2 phase and M phase, and being dephosphorylated sharply thereafter. In terms of processing, crotonylation (Kcr) is specifically present in male germ cells and marks testis-specific genes in post-meiotic cells, including X-linked genes that escape sex chromosome inactivation in haploid cells. Crotonylation marks active promoters and enhancers and confers resistance to transcriptional repressors. It is also associated with post-meiotically activated genes on autosomes. Post-translationally, citrullination at Arg-54 (H1R54ci) by PADI4 takes place within the DNA-binding site of H1 and results in its displacement from chromatin and global chromatin decondensation, thereby promoting pluripotency and stem cell maintenance. ADP-ribosylated on Ser-188 in response to DNA damage.

It is found in the nucleus. Its subcellular location is the chromosome. Functionally, histone H1 protein binds to linker DNA between nucleosomes forming the macromolecular structure known as the chromatin fiber. Histones H1 are necessary for the condensation of nucleosome chains into higher-order structured fibers. Also acts as a regulator of individual gene transcription through chromatin remodeling, nucleosome spacing and DNA methylation. This is Histone H1.2 from Homo sapiens (Human).